The primary structure comprises 231 residues: Nucleoside diphosphate kinase II, chloroplastic (231 aa).

The N-terminal 62 residues, 1-62 (MVGATVVSKW…RNSASRRRLR (62 aa)), are a transit peptide targeting the chloroplast. ATP contacts are provided by K91, F139, R167, T173, R184, and N194. H197 acts as the Pros-phosphohistidine intermediate in catalysis.

The protein belongs to the NDK family. Interacts with PHYA, MPK3 and MPK6. It depends on Mg(2+) as a cofactor. In terms of processing, autophosphorylated.

The protein resides in the plastid. Its subcellular location is the chloroplast. It carries out the reaction a 2'-deoxyribonucleoside 5'-diphosphate + ATP = a 2'-deoxyribonucleoside 5'-triphosphate + ADP. It catalyses the reaction a ribonucleoside 5'-diphosphate + ATP = a ribonucleoside 5'-triphosphate + ADP. Major role in the synthesis of nucleoside triphosphates other than ATP. The ATP gamma phosphate is transferred to the NDP beta phosphate via a ping-pong mechanism, using a phosphorylated active-site intermediate. May activate MPK3 and MPK6. May be involved in the regulation of cellular redox state and hydrogen peroxide-mediated MAP kinase signaling. The protein is Nucleoside diphosphate kinase II, chloroplastic (NDPK2) of Arabidopsis thaliana (Mouse-ear cress).